Reading from the N-terminus, the 837-residue chain is Striatin-interacting protein 1 (837 aa).

At Met1 the chain carries N-acetylmethionine. 2 disordered regions span residues 1-67 (MEPA…ESPD) and 333-423 (AASP…KGLP). Residues 18–35 (PQPPPPPPPATAQPPPGA) show a composition bias toward pro residues. A compositionally biased stretch (basic and acidic residues) spans 47 to 60 (KAREFNRNQRKDSE). Residues Ser59, Ser335, and Ser339 each carry the phosphoserine modification. The span at 356–377 (KALIKQDNLDAFNERDPYKADD) shows a compositional bias: basic and acidic residues. Residues 378–391 (SREEEEENDDDSSL) show a composition bias toward acidic residues. Ser788 bears the Phosphoserine mark. Residues 796 to 837 (DNCLQSVLGQRVDLPEDFQMNYDLWLEREVFSKPISWEELLQ) form a required for STRIPAK core complex formation region.

The protein belongs to the STRIP family. In terms of assembly, part of the core of STRIPAK complexes composed of PP2A catalytic and scaffolding subunits, the striatins (PP2A regulatory subunits), the striatin-associated proteins MOB4, STRIP1 and STRIP2, PDCD10 and members of the STE20 kinases, such as STK24 and STK26. The STRIPAK complex can be extended by adapter proteins such as SLMAP:SIKE1, CTTNBP2 or CTTNBP2NL. Interacts with CDC42BPB. Interacts with CTTNBP2NL.

It localises to the cytoplasm. Plays a role in the regulation of cell morphology and cytoskeletal organization. Required in the cortical actin filament dynamics and cell shape. Part of the striatin-interacting phosphatase and kinase (STRIPAK) complexes. STRIPAK complexes have critical roles in protein (de)phosphorylation and are regulators of multiple signaling pathways including Hippo, MAPK, nuclear receptor and cytoskeleton remodeling. Different types of STRIPAK complexes are involved in a variety of biological processes such as cell growth, differentiation, apoptosis, metabolism and immune regulation. The chain is Striatin-interacting protein 1 (Strip1) from Mus musculus (Mouse).